Here is a 72-residue protein sequence, read N- to C-terminus: uncharacterized protein (72 aa).

The protein belongs to the baculoviridae 8 kDa protein family.

This is an uncharacterized protein from Orgyia pseudotsugata (Douglas-fir tussock moth).